The chain runs to 215 residues: Myelin protein zero-like protein 2 (215 aa).

The first 26 residues, 1–26 (MYGKSSTRAVLLLLGIQLTALWPIAA), serve as a signal peptide directing secretion. Residues 27–141 (VEIYTSRVLE…DGVIGEIRLS (115 aa)) form the Ig-like V-type domain. Residues 27 to 154 (VEIYTSRVLE…TVRFSEIHFL (128 aa)) lie on the Extracellular side of the membrane. N-linked (GlcNAc...) asparagine glycosylation is found at asparagine 39 and asparagine 118. A disulfide bond links cysteine 47 and cysteine 123. A helical transmembrane segment spans residues 155–175 (ALAIGSACALMIIIVIVVVLF). The Cytoplasmic segment spans residues 176 to 215 (QHYRKKRWAERAHKVVEIKSKEEERLNQEKKVSVYLEDTD).

It belongs to the myelin P0 protein family. Widely expressed. In fetal tissues, highest expression in the inner ear. In adult tissues, highest levels in thymus and lung.

It localises to the membrane. Its function is as follows. Mediates homophilic cell-cell adhesion. The sequence is that of Myelin protein zero-like protein 2 (MPZL2) from Homo sapiens (Human).